Reading from the N-terminus, the 302-residue chain is uncharacterized protein (302 aa).

2 disordered regions span residues Met1 to Glu167 and Pro180 to Ser199. Basic and acidic residues predominate over residues Glu39 to Ser54. Polar residues-rich tracts occupy residues Leu123–Arg133 and Cys183–Arg197.

This is an uncharacterized protein from Homo sapiens (Human).